The sequence spans 494 residues: Probable cobyric acid synthase (494 aa).

Positions 249 to 447 (SVRIAVIRLP…LHGIFFNRRF (199 aa)) constitute a GATase cobBQ-type domain. Catalysis depends on C331, which acts as the Nucleophile. H439 is an active-site residue.

It belongs to the CobB/CobQ family. CobQ subfamily.

Its pathway is cofactor biosynthesis; adenosylcobalamin biosynthesis. Functionally, catalyzes amidations at positions B, D, E, and G on adenosylcobyrinic A,C-diamide. NH(2) groups are provided by glutamine, and one molecule of ATP is hydrogenolyzed for each amidation. In Methanopyrus kandleri (strain AV19 / DSM 6324 / JCM 9639 / NBRC 100938), this protein is Probable cobyric acid synthase.